Consider the following 137-residue polypeptide: MAANQKIVFALVCLFLACDLVLGQQQAANSSDSDSDVAESRTFGHHFLRRISFALVPGAFVVGVITTLLAALTVVSIKGLGVGVILLVLAIGQMLSRALPVQAAAAYAAAPVPVQAPVPVVYSHSHTQQPVWLEKEW.

Helical transmembrane passes span Ile7 to Ala27, Leu55 to Val75, and Ser76 to Ser96.

As to quaternary structure, interacts with crb.

The protein resides in the apical cell membrane. Functionally, transmembrane protein that plays a key role in trachea development by regulating crb localization and maintenance at the apical cell membrane. Required for anisotropic apical surface expansion important for tracheal tube elongation and lumen stability at larval stages. The protein is Protein apnoia of Drosophila melanogaster (Fruit fly).